Here is a 153-residue protein sequence, read N- to C-terminus: Cytochrome c-type biogenesis protein CcmE (153 aa).

Topologically, residues 1-8 (MTPVQRRR) are cytoplasmic. The helical; Signal-anchor for type II membrane protein transmembrane segment at 9-29 (LVWVLLALLASGLATALVAMA) threads the bilayer. Over 30 to 153 (LERNIAYLYT…DVPVTAPEVR (124 aa)) the chain is Periplasmic. Residues histidine 123 and tyrosine 127 each coordinate heme.

The protein belongs to the CcmE/CycJ family.

Its subcellular location is the cell inner membrane. Its function is as follows. Heme chaperone required for the biogenesis of c-type cytochromes. Transiently binds heme delivered by CcmC and transfers the heme to apo-cytochromes in a process facilitated by CcmF and CcmH. This Stenotrophomonas maltophilia (strain R551-3) protein is Cytochrome c-type biogenesis protein CcmE.